The chain runs to 1072 residues: DNA-directed RNA polymerase subunit beta (1072 aa).

It belongs to the RNA polymerase beta chain family. In terms of assembly, in plastids the minimal PEP RNA polymerase catalytic core is composed of four subunits: alpha, beta, beta', and beta''. When a (nuclear-encoded) sigma factor is associated with the core the holoenzyme is formed, which can initiate transcription.

It is found in the plastid. Its subcellular location is the chloroplast. The enzyme catalyses RNA(n) + a ribonucleoside 5'-triphosphate = RNA(n+1) + diphosphate. Functionally, DNA-dependent RNA polymerase catalyzes the transcription of DNA into RNA using the four ribonucleoside triphosphates as substrates. In Lemna minor (Common duckweed), this protein is DNA-directed RNA polymerase subunit beta.